We begin with the raw amino-acid sequence, 209 residues long: Uracil phosphoribosyltransferase (209 aa).

Residues arginine 79, arginine 104, and aspartate 131 to serine 139 each bind 5-phospho-alpha-D-ribose 1-diphosphate. Residues isoleucine 194 and glycine 199–alanine 201 each bind uracil. Residue aspartate 200 participates in 5-phospho-alpha-D-ribose 1-diphosphate binding.

This sequence belongs to the UPRTase family. The cofactor is Mg(2+).

It catalyses the reaction UMP + diphosphate = 5-phospho-alpha-D-ribose 1-diphosphate + uracil. It functions in the pathway pyrimidine metabolism; UMP biosynthesis via salvage pathway; UMP from uracil: step 1/1. With respect to regulation, allosterically activated by GTP. Functionally, catalyzes the conversion of uracil and 5-phospho-alpha-D-ribose 1-diphosphate (PRPP) to UMP and diphosphate. The chain is Uracil phosphoribosyltransferase from Streptococcus sanguinis (strain SK36).